A 1159-amino-acid chain; its full sequence is RAD51-associated protein 2 (1159 aa).

Positions 1-35 (MSLPQPTPRMAELRKPTSSLTPPEDPDSQPPSSKR) are disordered. An interaction with RAD51 region spans residues 1111-1159 (SHFPHGISRVRPLKTCSRPIRIGLSRKARIKQLHPYLKQMCYGNLKENF).

Interacts with RAD51. Specifically expressed in meiotic tissues. Highly expressed in testis.

The sequence is that of RAD51-associated protein 2 (RAD51AP2) from Homo sapiens (Human).